The chain runs to 507 residues: Histidine ammonia-lyase (507 aa).

The 5-imidazolinone (Ala-Gly) cross-link spans Ala-143–Gly-145. Ser-144 carries the 2,3-didehydroalanine (Ser) modification.

The protein belongs to the PAL/histidase family. Contains an active site 4-methylidene-imidazol-5-one (MIO), which is formed autocatalytically by cyclization and dehydration of residues Ala-Ser-Gly.

It is found in the cytoplasm. It catalyses the reaction L-histidine = trans-urocanate + NH4(+). The protein operates within amino-acid degradation; L-histidine degradation into L-glutamate; N-formimidoyl-L-glutamate from L-histidine: step 1/3. The chain is Histidine ammonia-lyase from Alkaliphilus oremlandii (strain OhILAs) (Clostridium oremlandii (strain OhILAs)).